Here is a 229-residue protein sequence, read N- to C-terminus: Urease accessory protein UreF (229 aa).

Belongs to the UreF family. As to quaternary structure, ureD, UreF and UreG form a complex that acts as a GTP-hydrolysis-dependent molecular chaperone, activating the urease apoprotein by helping to assemble the nickel containing metallocenter of UreC. The UreE protein probably delivers the nickel.

It is found in the cytoplasm. Its function is as follows. Required for maturation of urease via the functional incorporation of the urease nickel metallocenter. In Staphylococcus aureus (strain MRSA252), this protein is Urease accessory protein UreF.